The sequence spans 347 residues: NADH-quinone oxidoreductase subunit H (347 aa).

The next 8 membrane-spanning stretches (helical) occupy residues 21 to 41 (VAGILLIALPLMLAVAMIIYA), 87 to 107 (GLFLIAPIITFTVALLAWAVI), 118 to 138 (INVGLLYILAISSLGVYGVIL), 157 to 177 (AQMISYEVSIGFILIGVVLFA), 195 to 215 (GIVNAFGFNLLLFPLAVMFLI), 258 to 278 (NVLLMCTLNAVLFWGGWLPPI), 283 to 303 (LYAVPGIIWLFAKILFFFFVF), and 323 to 343 (WKIFLPISLIWIFLISGYLML).

Belongs to the complex I subunit 1 family. In terms of assembly, NDH-1 is composed of 14 different subunits. Subunits NuoA, H, J, K, L, M, N constitute the membrane sector of the complex.

Its subcellular location is the cell inner membrane. It carries out the reaction a quinone + NADH + 5 H(+)(in) = a quinol + NAD(+) + 4 H(+)(out). Functionally, NDH-1 shuttles electrons from NADH, via FMN and iron-sulfur (Fe-S) centers, to quinones in the respiratory chain. The immediate electron acceptor for the enzyme in this species is believed to be ubiquinone. Couples the redox reaction to proton translocation (for every two electrons transferred, four hydrogen ions are translocated across the cytoplasmic membrane), and thus conserves the redox energy in a proton gradient. This subunit may bind ubiquinone. The polypeptide is NADH-quinone oxidoreductase subunit H (Sphingopyxis alaskensis (strain DSM 13593 / LMG 18877 / RB2256) (Sphingomonas alaskensis)).